Reading from the N-terminus, the 486-residue chain is Glutamyl-tRNA(Gln) amidotransferase subunit A (486 aa).

Residues lysine 74 and serine 149 each act as charge relay system in the active site. The active-site Acyl-ester intermediate is the serine 173.

Belongs to the amidase family. GatA subfamily. Heterotrimer of A, B and C subunits.

It catalyses the reaction L-glutamyl-tRNA(Gln) + L-glutamine + ATP + H2O = L-glutaminyl-tRNA(Gln) + L-glutamate + ADP + phosphate + H(+). Its function is as follows. Allows the formation of correctly charged Gln-tRNA(Gln) through the transamidation of misacylated Glu-tRNA(Gln) in organisms which lack glutaminyl-tRNA synthetase. The reaction takes place in the presence of glutamine and ATP through an activated gamma-phospho-Glu-tRNA(Gln). This is Glutamyl-tRNA(Gln) amidotransferase subunit A from Prochlorococcus marinus (strain MIT 9303).